The sequence spans 87 residues: Signal recognition particle 19 kDa protein (87 aa).

It belongs to the SRP19 family. As to quaternary structure, part of the signal recognition particle protein translocation system, which is composed of SRP and FtsY. Archaeal SRP consists of a 7S RNA molecule of 300 nucleotides and two protein subunits: SRP54 and SRP19.

The protein localises to the cytoplasm. Involved in targeting and insertion of nascent membrane proteins into the cytoplasmic membrane. Binds directly to 7S RNA and mediates binding of the 54 kDa subunit of the SRP. The sequence is that of Signal recognition particle 19 kDa protein from Methanocaldococcus jannaschii (strain ATCC 43067 / DSM 2661 / JAL-1 / JCM 10045 / NBRC 100440) (Methanococcus jannaschii).